Reading from the N-terminus, the 855-residue chain is Nuclear valosin-containing protein-like (855 aa).

Positions 1–219 (MKPRPGVFVD…SLLESDKKRK (219 aa)) are interaction with RPL5. A Nucleolar localization signal motif is present at residues 49-52 (RRKR). An N6-acetyllysine modification is found at Lys70. The tract at residues 83–234 (LAKRARQDEE…KGNKRKTENL (152 aa)) is disordered. The Nuclear localization signal signature appears at 85–88 (KRAR). Positions 90 to 110 (DEEDEYTESYSDDDSNMEDYP) are enriched in acidic residues. 2 stretches are compositionally biased toward polar residues: residues 113–123 (QSANPMNSSLL) and 131–157 (SESV…SKTG). Ser133 is subject to Phosphoserine. At Thr137 the chain carries Phosphothreonine. An N6-acetyllysine modification is found at Lys155. Ser190 bears the Phosphoserine mark. Lys207 participates in a covalent cross-link: Glycyl lysine isopeptide (Lys-Gly) (interchain with G-Cter in SUMO2). Phosphoserine is present on residues Ser210 and Ser214. Residues 217-228 (KRKGRAKGKGNK) show a composition bias toward basic residues. Positions 217-231 (KRKGRAKGKGNKRKT) match the Nuclear localization signal motif. The interaction with WDR74 stretch occupies residues 266–473 (VGGNDATLKE…LTPGFVGADL (208 aa)). 304 to 311 (GPPGCGKT) serves as a coordination point for ATP. Residues 496–523 (QKKKPEIEGLPSEGDQEERLGAEPTSET) form a disordered region. 621-628 (GPPGCGKT) is an ATP binding site.

Belongs to the AAA ATPase family. As to quaternary structure, interacts with NCL/nucleolin. Isoform 1 and isoform 2 interact with TERT and isoform 1 exhibits a higher binding affinity for TERT compared to isoform 2. Isoform 1 interacts with MTREX in an ATP-dependent manner; the interaction is required to associate NVL with nuclear RNA exosome. Isoform 1 interacts with RPL5 in an ATP-dependent manner. Interacts with WDR74 (through WDR repeats); the interaction is independent of RNA or pre-60S ribosome particles.

The protein resides in the nucleus. It localises to the nucleolus. Its subcellular location is the nucleoplasm. Functionally, participates in the assembly of the telomerase holoenzyme and effecting of telomerase activity via its interaction with TERT. Involved in both early and late stages of the pre-rRNA processing pathways. Spatiotemporally regulates 60S ribosomal subunit biogenesis in the nucleolus. Catalyzes the release of specific assembly factors, such as WDR74, from pre-60S ribosomal particles through the ATPase activity. The polypeptide is Nuclear valosin-containing protein-like (Mus musculus (Mouse)).